Consider the following 237-residue polypeptide: Phosphoribosylaminoimidazole-succinocarboxamide synthase (237 aa).

Belongs to the SAICAR synthetase family.

The catalysed reaction is 5-amino-1-(5-phospho-D-ribosyl)imidazole-4-carboxylate + L-aspartate + ATP = (2S)-2-[5-amino-1-(5-phospho-beta-D-ribosyl)imidazole-4-carboxamido]succinate + ADP + phosphate + 2 H(+). The protein operates within purine metabolism; IMP biosynthesis via de novo pathway; 5-amino-1-(5-phospho-D-ribosyl)imidazole-4-carboxamide from 5-amino-1-(5-phospho-D-ribosyl)imidazole-4-carboxylate: step 1/2. The protein is Phosphoribosylaminoimidazole-succinocarboxamide synthase of Photorhabdus laumondii subsp. laumondii (strain DSM 15139 / CIP 105565 / TT01) (Photorhabdus luminescens subsp. laumondii).